Here is a 338-residue protein sequence, read N- to C-terminus: Fructose-1,6-bisphosphatase class 1 (338 aa).

Positions 92, 113, 115, and 116 each coordinate Mg(2+). Substrate-binding positions include 116–119 (DGSS), Asn208, and Lys274. Glu280 serves as a coordination point for Mg(2+).

This sequence belongs to the FBPase class 1 family. As to quaternary structure, homotetramer. The cofactor is Mg(2+).

It is found in the cytoplasm. It carries out the reaction beta-D-fructose 1,6-bisphosphate + H2O = beta-D-fructose 6-phosphate + phosphate. The protein operates within carbohydrate biosynthesis; gluconeogenesis. In Paramagnetospirillum magneticum (strain ATCC 700264 / AMB-1) (Magnetospirillum magneticum), this protein is Fructose-1,6-bisphosphatase class 1.